The chain runs to 247 residues: Flavin-dependent thymidylate synthase (247 aa).

Residues 1–237 (MRVRLLEATE…PHTFEYYDAE (237 aa)) enclose the ThyX domain. Residues 85-88 (QLTR), 98-100 (SMR), and arginine 176 contribute to the dUMP site. 88–90 (RHR) contacts FAD. The ThyX motif signature appears at 88–98 (RHRHASFDVQS). FAD is bound by residues 192-194 (NPR) and histidine 198. Arginine 203 contacts dUMP. The active-site Involved in ionization of N3 of dUMP, leading to its activation is the arginine 203.

This sequence belongs to the thymidylate synthase ThyX family. Homotetramer. Requires FAD as cofactor.

It carries out the reaction dUMP + (6R)-5,10-methylene-5,6,7,8-tetrahydrofolate + NADPH + H(+) = dTMP + (6S)-5,6,7,8-tetrahydrofolate + NADP(+). It functions in the pathway pyrimidine metabolism; dTTP biosynthesis. In terms of biological role, catalyzes the reductive methylation of 2'-deoxyuridine-5'-monophosphate (dUMP) to 2'-deoxythymidine-5'-monophosphate (dTMP) while utilizing 5,10-methylenetetrahydrofolate (mTHF) as the methyl donor, and NADPH and FADH(2) as the reductant. This Halobacterium salinarum (strain ATCC 700922 / JCM 11081 / NRC-1) (Halobacterium halobium) protein is Flavin-dependent thymidylate synthase.